The chain runs to 206 residues: Orotate phosphoribosyltransferase (206 aa).

Residues Lys-26, 72-73 (YK), Arg-99, Lys-100, Lys-103, His-105, and 124-132 (DDVMTSGFS) each bind 5-phospho-alpha-D-ribose 1-diphosphate. Positions 128 and 157 each coordinate orotate.

This sequence belongs to the purine/pyrimidine phosphoribosyltransferase family. PyrE subfamily. Homodimer. It depends on Mg(2+) as a cofactor.

The catalysed reaction is orotidine 5'-phosphate + diphosphate = orotate + 5-phospho-alpha-D-ribose 1-diphosphate. It participates in pyrimidine metabolism; UMP biosynthesis via de novo pathway; UMP from orotate: step 1/2. Functionally, catalyzes the transfer of a ribosyl phosphate group from 5-phosphoribose 1-diphosphate to orotate, leading to the formation of orotidine monophosphate (OMP). This chain is Orotate phosphoribosyltransferase, found in Buchnera aphidicola subsp. Baizongia pistaciae (strain Bp).